Reading from the N-terminus, the 267-residue chain is Ribosomal RNA small subunit methyltransferase A (267 aa).

H13, L15, G40, E61, D85, and N105 together coordinate S-adenosyl-L-methionine.

The protein belongs to the class I-like SAM-binding methyltransferase superfamily. rRNA adenine N(6)-methyltransferase family. RsmA subfamily.

It is found in the cytoplasm. It carries out the reaction adenosine(1518)/adenosine(1519) in 16S rRNA + 4 S-adenosyl-L-methionine = N(6)-dimethyladenosine(1518)/N(6)-dimethyladenosine(1519) in 16S rRNA + 4 S-adenosyl-L-homocysteine + 4 H(+). In terms of biological role, specifically dimethylates two adjacent adenosines (A1518 and A1519) in the loop of a conserved hairpin near the 3'-end of 16S rRNA in the 30S particle. May play a critical role in biogenesis of 30S subunits. The protein is Ribosomal RNA small subunit methyltransferase A of Bacteroides thetaiotaomicron (strain ATCC 29148 / DSM 2079 / JCM 5827 / CCUG 10774 / NCTC 10582 / VPI-5482 / E50).